Consider the following 110-residue polypeptide: Large ribosomal subunit protein uL22 (110 aa).

Belongs to the universal ribosomal protein uL22 family. Part of the 50S ribosomal subunit.

In terms of biological role, this protein binds specifically to 23S rRNA; its binding is stimulated by other ribosomal proteins, e.g. L4, L17, and L20. It is important during the early stages of 50S assembly. It makes multiple contacts with different domains of the 23S rRNA in the assembled 50S subunit and ribosome. Functionally, the globular domain of the protein is located near the polypeptide exit tunnel on the outside of the subunit, while an extended beta-hairpin is found that lines the wall of the exit tunnel in the center of the 70S ribosome. The polypeptide is Large ribosomal subunit protein uL22 (Hydrogenovibrio crunogenus (strain DSM 25203 / XCL-2) (Thiomicrospira crunogena)).